We begin with the raw amino-acid sequence, 208 residues long: Probable GTP-binding protein EngB (208 aa).

The EngB-type G domain maps to 22–195; it reads GLPEIALAGR…WGALEDIFVE (174 aa). GTP-binding positions include 30-37, 57-61, 75-78, 142-145, and 174-176; these read GRSNVGKS, GKTRT, DLPG, TKSD, and ISS. 2 residues coordinate Mg(2+): S37 and T59.

Belongs to the TRAFAC class TrmE-Era-EngA-EngB-Septin-like GTPase superfamily. EngB GTPase family. Mg(2+) is required as a cofactor.

In terms of biological role, necessary for normal cell division and for the maintenance of normal septation. This Alkaliphilus metalliredigens (strain QYMF) protein is Probable GTP-binding protein EngB.